The chain runs to 150 residues: Endoribonuclease YbeY (150 aa).

Positions 113, 117, and 123 each coordinate Zn(2+).

Belongs to the endoribonuclease YbeY family. Requires Zn(2+) as cofactor.

The protein localises to the cytoplasm. Its function is as follows. Single strand-specific metallo-endoribonuclease involved in late-stage 70S ribosome quality control and in maturation of the 3' terminus of the 16S rRNA. In Wolbachia sp. subsp. Drosophila simulans (strain wRi), this protein is Endoribonuclease YbeY.